A 127-amino-acid polypeptide reads, in one-letter code: Aspartate 1-decarboxylase (127 aa).

Ser-25 acts as the Schiff-base intermediate with substrate; via pyruvic acid in catalysis. A Pyruvic acid (Ser) modification is found at Ser-25. Thr-57 provides a ligand contact to substrate. Tyr-58 (proton donor) is an active-site residue. Position 73–75 (73–75 (GAA)) interacts with substrate.

This sequence belongs to the PanD family. As to quaternary structure, heterooctamer of four alpha and four beta subunits. Pyruvate is required as a cofactor. Post-translationally, is synthesized initially as an inactive proenzyme, which is activated by self-cleavage at a specific serine bond to produce a beta-subunit with a hydroxyl group at its C-terminus and an alpha-subunit with a pyruvoyl group at its N-terminus.

The protein localises to the cytoplasm. The catalysed reaction is L-aspartate + H(+) = beta-alanine + CO2. Its pathway is cofactor biosynthesis; (R)-pantothenate biosynthesis; beta-alanine from L-aspartate: step 1/1. Catalyzes the pyruvoyl-dependent decarboxylation of aspartate to produce beta-alanine. The sequence is that of Aspartate 1-decarboxylase from Bacillus pumilus (strain SAFR-032).